The following is a 364-amino-acid chain: S-adenosylmethionine:tRNA ribosyltransferase-isomerase (364 aa).

Belongs to the QueA family. Monomer.

Its subcellular location is the cytoplasm. The enzyme catalyses 7-aminomethyl-7-carbaguanosine(34) in tRNA + S-adenosyl-L-methionine = epoxyqueuosine(34) in tRNA + adenine + L-methionine + 2 H(+). It functions in the pathway tRNA modification; tRNA-queuosine biosynthesis. In terms of biological role, transfers and isomerizes the ribose moiety from AdoMet to the 7-aminomethyl group of 7-deazaguanine (preQ1-tRNA) to give epoxyqueuosine (oQ-tRNA). The protein is S-adenosylmethionine:tRNA ribosyltransferase-isomerase of Lachnoclostridium phytofermentans (strain ATCC 700394 / DSM 18823 / ISDg) (Clostridium phytofermentans).